A 107-amino-acid chain; its full sequence is CLAVATA3/ESR (CLE)-related protein 10 (107 aa).

A signal peptide spans 1-23; sequence MKTNRNRPINILIVFFLLTTARA. Residues N27 and N30 are each glycosylated (N-linked (GlcNAc...) asparagine). Residues 73 to 107 form a disordered region; the sequence is SRQPLFSPPPPPTEIDQRYGVEKRLVPSGPNPLHN. Residues 87–97 show a composition bias toward basic and acidic residues; that stretch reads IDQRYGVEKRL. Hydroxyproline occurs at positions 99 and 102. O-linked (Ara...) hydroxyproline glycosylation is present at P102.

The protein belongs to the CLV3/ESR signal peptide family. The O-glycosylation (arabinosylation) of the hydroxyproline Pro-102 enhances binding affinity of the CLE10p peptide for its receptor. Expressed in stems, apex, leaves, flowers, siliques and pollen.

The protein localises to the secreted. Its subcellular location is the extracellular space. Extracellular signal peptide that regulates cell fate. Represses root apical meristem maintenance. Regulates the transition of protophloem cells from proliferation to differentiation, thus impinging on postembryonic growth capacity of the root meristem; this signaling pathway requires CRN and CLV2. The polypeptide is CLAVATA3/ESR (CLE)-related protein 10 (Arabidopsis thaliana (Mouse-ear cress)).